The following is a 371-amino-acid chain: Thyroid transcription factor 1 (371 aa).

Residues 161–220 (RRKRRVLFSQAQVYELERRFKQQKYLSAPEREHLASMIHLTPTQVKIWFQNHRYKMKRQA) constitute a DNA-binding region (homeobox). Disordered stretches follow at residues 219–294 (QAKD…QQQA) and 308–342 (SGGP…ALQG). Gly residues predominate over residues 233 to 243 (SGGGGGGGGAG). Composition is skewed to low complexity over residues 244–253 (CPQQQQAQQQ) and 272–294 (AGAP…QQQA).

Belongs to the NK-2 homeobox family. Phosphorylated on serine residues. In terms of tissue distribution, thyroid, lung and CNS.

The protein localises to the nucleus. In terms of biological role, transcription factor that binds and activates the promoter of thyroid specific genes such as thyroglobulin, thyroperoxidase, and thyrotropin receptor. Crucial in the maintenance of the thyroid differentiation phenotype. May play a role in lung development and surfactant homeostasis. This is Thyroid transcription factor 1 (TITF1) from Canis lupus familiaris (Dog).